Consider the following 120-residue polypeptide: Cell division protein FtsL (120 aa).

Residues Met-1–Arg-36 lie on the Cytoplasmic side of the membrane. A helical membrane pass occupies residues Ile-37–Ile-57. Topologically, residues Gly-58 to Lys-120 are extracellular.

Belongs to the FtsL family.

The protein localises to the cell membrane. Essential cell division protein. The sequence is that of Cell division protein FtsL from Bacillus cereus (strain ATCC 14579 / DSM 31 / CCUG 7414 / JCM 2152 / NBRC 15305 / NCIMB 9373 / NCTC 2599 / NRRL B-3711).